We begin with the raw amino-acid sequence, 261 residues long: Sepiapterin reductase (261 aa).

N-acetylmethionine is present on Met-1. 15 to 21 (GASRGFG) lines the NADP(+) pocket. Ser-33 is subject to Phosphoserine. Position 43 to 44 (43 to 44 (RS)) interacts with NADP(+). Ser-46 carries the post-translational modification Phosphoserine. Residue 70–71 (DL) participates in NADP(+) binding. Substrate is bound by residues 158 to 159 (SL) and Tyr-171. Residue Lys-175 coordinates NADP(+). The residue at position 196 (Ser-196) is a Phosphoserine. Substrate is bound at residue Gly-200. 202–207 (LDNDMQ) is an NADP(+) binding site. Ser-214 is subject to Phosphoserine. Substrate contacts are provided by Lys-222 and Asp-258.

It belongs to the sepiapterin reductase family. Homodimer.

Its subcellular location is the cytoplasm. The enzyme catalyses L-erythro-7,8-dihydrobiopterin + NADP(+) = L-sepiapterin + NADPH + H(+). It carries out the reaction (6R)-L-erythro-5,6,7,8-tetrahydrobiopterin + 2 NADP(+) = 6-pyruvoyl-5,6,7,8-tetrahydropterin + 2 NADPH + 2 H(+). In terms of biological role, catalyzes the final one or two reductions in tetra-hydrobiopterin biosynthesis to form 5,6,7,8-tetrahydrobiopterin. The polypeptide is Sepiapterin reductase (Spr) (Mus musculus (Mouse)).